A 298-amino-acid chain; its full sequence is Bifunctional methyltransferase/endonuclease (298 aa).

The segment at 1–79 is probable methylated-DNA--protein-cysteine methyltransferase; sequence MQSIDLYSYL…SLGIDEKIRR (79 aa). C56 is a catalytic residue. The endonuclease V stretch occupies residues 80 to 298; that stretch reads LRNDGIEINN…TVALRRNNII (219 aa). Mg(2+) contacts are provided by D137 and D197.

It in the N-terminal section; belongs to the MGMT family. The protein in the C-terminal section; belongs to the endonuclease V family. Mg(2+) is required as a cofactor.

The protein resides in the cytoplasm. It catalyses the reaction Endonucleolytic cleavage at apurinic or apyrimidinic sites to products with a 5'-phosphate.. Its function is as follows. DNA repair enzyme involved in the repair of deaminated bases. Selectively cleaves double-stranded DNA at the second phosphodiester bond 3' to a deoxyinosine leaving behind the intact lesion on the nicked DNA. The sequence is that of Bifunctional methyltransferase/endonuclease from Picrophilus torridus (strain ATCC 700027 / DSM 9790 / JCM 10055 / NBRC 100828 / KAW 2/3).